The sequence spans 693 residues: Cleavage and polyadenylation specificity factor subunit 3-I (693 aa).

An HXHXDH motif motif is present at residues 81–86; the sequence is HFHIDH.

The protein belongs to the metallo-beta-lactamase superfamily. RNA-metabolizing metallo-beta-lactamase-like family. INTS11 subfamily. Component of the CPSF complex, at least composed of CPSF160, CPSF100, CPSF73-I, CPSF73-II, CPSF30, FY and FIPS5. Interacts with CLPS3, CPSF100, CPSF160 and FY. As to expression, highly expressed in carpels. Also detected in seedlings, roots, stems, leaves, flowers and siliques.

Its subcellular location is the nucleus. Component of the cleavage and polyadenylation specificity factor (CPSF) complex that play a key role in pre-mRNA 3'-end formation, recognizing the AAUAAA signal sequence and interacting with poly(A) polymerase and other factors to bring about cleavage and poly(A) addition. May function as mRNA 3'-end-processing endonuclease and also be involved in the histone 3'-end pre-mRNA processing. The polypeptide is Cleavage and polyadenylation specificity factor subunit 3-I (CPSF73-I) (Arabidopsis thaliana (Mouse-ear cress)).